A 261-amino-acid polypeptide reads, in one-letter code: Succinate dehydrogenase iron-sulfur subunit (261 aa).

The disordered stretch occupies residues 1-23 (MAELRLPPNSVVKKGKEHKEQEE). The 2Fe-2S ferredoxin-type domain occupies 28-119 (RKVKIYRYDP…DIKIYPLPHM (92 aa)). [2Fe-2S] cluster contacts are provided by Cys80, Cys85, and Cys100. Residues 161–191 (GREKLDGLYECILCACCSTSCPSYWWNGDKY) form the 4Fe-4S ferredoxin-type domain. Residues Cys171, Cys174, and Cys177 each contribute to the [4Fe-4S] cluster site. Position 181 (Cys181) interacts with [3Fe-4S] cluster. Trp186 contributes to the a ubiquinone binding site. Cys228 and Cys234 together coordinate [3Fe-4S] cluster. Cys238 is a binding site for [4Fe-4S] cluster.

This sequence belongs to the succinate dehydrogenase/fumarate reductase iron-sulfur protein family. As to quaternary structure, part of an enzyme complex containing four subunits: a flavoprotein, an iron-sulfur, cytochrome b-556, and a hydrophobic anchor protein. [2Fe-2S] cluster serves as cofactor. The cofactor is [3Fe-4S] cluster. It depends on [4Fe-4S] cluster as a cofactor.

It carries out the reaction a quinone + succinate = fumarate + a quinol. The protein operates within carbohydrate metabolism; tricarboxylic acid cycle; fumarate from succinate (bacterial route): step 1/1. This chain is Succinate dehydrogenase iron-sulfur subunit (sdhB), found in Rickettsia felis (strain ATCC VR-1525 / URRWXCal2) (Rickettsia azadi).